We begin with the raw amino-acid sequence, 350 residues long: DNA polymerase IV (350 aa).

Residues 5-181 enclose the UmuC domain; sequence IMHYDMDAFY…KKIKIIPGVG (177 aa). The Mg(2+) site is built by Asp-9 and Asp-99. Glu-100 is an active-site residue.

Belongs to the DNA polymerase type-Y family. In terms of assembly, monomer. It depends on Mg(2+) as a cofactor.

It is found in the cytoplasm. It carries out the reaction DNA(n) + a 2'-deoxyribonucleoside 5'-triphosphate = DNA(n+1) + diphosphate. Functionally, poorly processive, error-prone DNA polymerase involved in untargeted mutagenesis. Copies undamaged DNA at stalled replication forks, which arise in vivo from mismatched or misaligned primer ends. These misaligned primers can be extended by PolIV. Exhibits no 3'-5' exonuclease (proofreading) activity. May be involved in translesional synthesis, in conjunction with the beta clamp from PolIII. This is DNA polymerase IV from Fusobacterium nucleatum subsp. nucleatum (strain ATCC 25586 / DSM 15643 / BCRC 10681 / CIP 101130 / JCM 8532 / KCTC 2640 / LMG 13131 / VPI 4355).